We begin with the raw amino-acid sequence, 227 residues long: Phosphoglycolate phosphatase (227 aa).

Asp14 (nucleophile) is an active-site residue. Positions 14, 16, and 177 each coordinate Mg(2+).

The protein belongs to the HAD-like hydrolase superfamily. CbbY/CbbZ/Gph/YieH family. The cofactor is Mg(2+).

It catalyses the reaction 2-phosphoglycolate + H2O = glycolate + phosphate. Its pathway is organic acid metabolism; glycolate biosynthesis; glycolate from 2-phosphoglycolate: step 1/1. Its function is as follows. Specifically catalyzes the dephosphorylation of 2-phosphoglycolate. Is involved in the dissimilation of the intracellular 2-phosphoglycolate formed during the DNA repair of 3'-phosphoglycolate ends, a major class of DNA lesions induced by oxidative stress. This Thiobacillus denitrificans (strain ATCC 25259 / T1) protein is Phosphoglycolate phosphatase.